The chain runs to 504 residues: D-alanine--D-alanyl carrier protein ligase (504 aa).

152–153 (TS) provides a ligand contact to ATP. Asp197 contacts D-alanine. 292 to 297 (NTYGPT) provides a ligand contact to ATP. Val301 is a D-alanine binding site. ATP contacts are provided by residues Asp383, 394–397 (YNGR), and Lys492. Lys492 provides a ligand contact to D-alanine.

This sequence belongs to the ATP-dependent AMP-binding enzyme family. DltA subfamily.

The protein resides in the cytoplasm. It carries out the reaction holo-[D-alanyl-carrier protein] + D-alanine + ATP = D-alanyl-[D-alanyl-carrier protein] + AMP + diphosphate. It participates in cell wall biogenesis; lipoteichoic acid biosynthesis. In terms of biological role, catalyzes the first step in the D-alanylation of lipoteichoic acid (LTA), the activation of D-alanine and its transfer onto the D-alanyl carrier protein (Dcp) DltC. In an ATP-dependent two-step reaction, forms a high energy D-alanyl-AMP intermediate, followed by transfer of the D-alanyl residue as a thiol ester to the phosphopantheinyl prosthetic group of the Dcp. D-alanylation of LTA plays an important role in modulating the properties of the cell wall in Gram-positive bacteria, influencing the net charge of the cell wall. This Bacillus mycoides (strain KBAB4) (Bacillus weihenstephanensis) protein is D-alanine--D-alanyl carrier protein ligase.